Reading from the N-terminus, the 162-residue chain is Endoribonuclease YbeY (162 aa).

3 residues coordinate Zn(2+): histidine 127, histidine 131, and histidine 137.

The protein belongs to the endoribonuclease YbeY family. Requires Zn(2+) as cofactor.

It is found in the cytoplasm. In terms of biological role, single strand-specific metallo-endoribonuclease involved in late-stage 70S ribosome quality control and in maturation of the 3' terminus of the 16S rRNA. The polypeptide is Endoribonuclease YbeY (Acetivibrio thermocellus (strain ATCC 27405 / DSM 1237 / JCM 9322 / NBRC 103400 / NCIMB 10682 / NRRL B-4536 / VPI 7372) (Clostridium thermocellum)).